Reading from the N-terminus, the 68-residue chain is ATP synthase subunit K, mitochondrial (68 aa).

The helical transmembrane segment at 15 to 31 threads the bilayer; sequence HQLAIGTLGLLGLLVVP.

The protein belongs to the ATP19 family. In terms of assembly, F-type ATPases have 2 components, CF(1) - the catalytic core - and CF(0) - the membrane proton channel. In yeast, the dimeric form of ATP synthase consists of 17 polypeptides: alpha, beta, gamma, delta, epsilon, 4 (B), 5 (OSCP), 6 (A), 8, 9 (C), d, E (Tim11), f, g, h, i/j and k.

It localises to the mitochondrion inner membrane. Functionally, mitochondrial membrane ATP synthase (F(1)F(0) ATP synthase or Complex V) produces ATP from ADP in the presence of a proton gradient across the membrane which is generated by electron transport complexes of the respiratory chain. F-type ATPases consist of two structural domains, F(1) - containing the extramembraneous catalytic core and F(0) - containing the membrane proton channel, linked together by a central stalk and a peripheral stalk. During catalysis, ATP synthesis in the catalytic domain of F(1) is coupled via a rotary mechanism of the central stalk subunits to proton translocation. Part of the complex F(0) domain. Minor subunit located with subunit a in the membrane. The K chain binds the dimeric form by interacting with the G and E chains. This chain is ATP synthase subunit K, mitochondrial (ATP19), found in Saccharomyces cerevisiae (strain ATCC 204508 / S288c) (Baker's yeast).